Here is a 355-residue protein sequence, read N- to C-terminus: 3-isopropylmalate dehydrogenase (355 aa).

Positions 98, 108, 132, and 223 each coordinate substrate. Mg(2+)-binding residues include D223, D247, and D251. G283–D295 is an NAD(+) binding site.

The protein belongs to the isocitrate and isopropylmalate dehydrogenases family. LeuB type 2 subfamily. As to quaternary structure, homodimer. Mg(2+) is required as a cofactor. The cofactor is Mn(2+).

It localises to the cytoplasm. The enzyme catalyses (2R,3S)-3-isopropylmalate + NAD(+) = 4-methyl-2-oxopentanoate + CO2 + NADH. Its pathway is amino-acid biosynthesis; L-leucine biosynthesis; L-leucine from 3-methyl-2-oxobutanoate: step 3/4. Catalyzes the oxidation of 3-carboxy-2-hydroxy-4-methylpentanoate (3-isopropylmalate) to 3-carboxy-4-methyl-2-oxopentanoate. The product decarboxylates to 4-methyl-2 oxopentanoate. This chain is 3-isopropylmalate dehydrogenase, found in Clavibacter michiganensis subsp. michiganensis (strain NCPPB 382).